Here is a 615-residue protein sequence, read N- to C-terminus: Elongation factor 4 (615 aa).

One can recognise a tr-type G domain in the interval 17–198 (ASIRNFCIIA…RVSRTIPAPV (182 aa)). GTP contacts are provided by residues 29–34 (DHGKST) and 145–148 (NKID).

The protein belongs to the TRAFAC class translation factor GTPase superfamily. Classic translation factor GTPase family. LepA subfamily.

It is found in the cell membrane. It catalyses the reaction GTP + H2O = GDP + phosphate + H(+). In terms of biological role, required for accurate and efficient protein synthesis under certain stress conditions. May act as a fidelity factor of the translation reaction, by catalyzing a one-codon backward translocation of tRNAs on improperly translocated ribosomes. Back-translocation proceeds from a post-translocation (POST) complex to a pre-translocation (PRE) complex, thus giving elongation factor G a second chance to translocate the tRNAs correctly. Binds to ribosomes in a GTP-dependent manner. This is Elongation factor 4 from Clavibacter sepedonicus (Clavibacter michiganensis subsp. sepedonicus).